The sequence spans 104 residues: MSNRVSTGKMAMAPQESVQPAVLYKLVLFALLMAVVPIGTYFSTLNYLWDGASRCGFPSGLCSTTFAAISAIAAANLILVGYVVVAFREDAASRTGPLPEKKTS.

Residues 1 to 21 (MSNRVSTGKMAMAPQESVQPA) lie on the Cytoplasmic side of the membrane. The helical transmembrane segment at 22–42 (VLYKLVLFALLMAVVPIGTYF) threads the bilayer. The Lumenal portion of the chain corresponds to 43–65 (STLNYLWDGASRCGFPSGLCSTT). Residues 66-86 (FAAISAIAAANLILVGYVVVA) form a helical membrane-spanning segment. Over 87–104 (FREDAASRTGPLPEKKTS) the chain is Cytoplasmic. Positions 101–104 (KKTS) match the Prevents secretion from ER motif.

This sequence belongs to the VMA21 family.

It is found in the endoplasmic reticulum membrane. Its subcellular location is the endoplasmic reticulum-Golgi intermediate compartment membrane. The protein localises to the cytoplasmic vesicle. The protein resides in the COPII-coated vesicle membrane. Required for the assembly of the V0 complex of the vacuolar ATPase (V-ATPase) in the endoplasmic reticulum. The chain is Vacuolar ATPase assembly integral membrane protein VMA21 from Cryptococcus neoformans var. neoformans serotype D (strain B-3501A) (Filobasidiella neoformans).